We begin with the raw amino-acid sequence, 307 residues long: MKKVAVIGTGVIGNGWITRFLANGCEVVAHDPAPGAKERTIQAIENAWESVEQLGLKEGASKDSLTFVDSIEEAVKDADLIQESVPERYELKHGVLKEIDRFAHSNTIIGSSTSGIKPTDLQIGLNHPERLVVAHPFNPVYLLPLVEIVGGEATTKEITNRASVYYESLQMKPMVIEKEIEGFVADRLMEALWREALHLVNDGIATTEEVDKAITYGAGLRWAQMGPFMTFHLAGGNAGMRHMLEQFGPALKLPWTKLEAPELTDELKERVIQGCETHANDRSVEELEKKRNEFLVKLIDLVEDYWP.

8-13 (GTGVIG) is an NAD(+) binding site.

The protein belongs to the 3-hydroxyacyl-CoA dehydrogenase family. L-carnitine dehydrogenase subfamily. In terms of assembly, homodimer.

The protein localises to the cytoplasm. It carries out the reaction carnitine + NAD(+) = 3-dehydrocarnitine + NADH + H(+). The protein operates within amine and polyamine metabolism; carnitine metabolism. Catalyzes the NAD(+)-dependent oxidation of L-carnitine to 3-dehydrocarnitine. The protein is L-carnitine dehydrogenase of Oceanobacillus iheyensis (strain DSM 14371 / CIP 107618 / JCM 11309 / KCTC 3954 / HTE831).